Consider the following 227-residue polypeptide: Hydroxylase/desaturase asaB (227 aa).

This sequence belongs to the asaB hydroxylase/desaturase family.

It participates in secondary metabolite biosynthesis. Functionally, hydroxylase/desaturase; part of the gene cluster that mediates the biosynthesis of aspergillic acid, a hydroxamic acid-containing pyrazinone with aliphatic side chains that originates from leucine (Leu) and isoleucine (Ile). Aspergillic acid has antibiotic properties and was shown to be lethal to mice. The first step in the pathway is the production of deoxyaspergillic acid via a condensation between the Ile amine and the Leu carboxylic acid, followed by a reductive release from the protein forming the dipeptide aldehyde NH(2)-Leu-Ile-CHO, which could undergo an intermolecular cyclization resulting in a dihydropyrazinone. As the NRPS asaC lacks a condensation domain, it is improbable that it is responsible for condensation of Leu and Ile. One possibility is that asaC acts on a previously condensed dipeptide and functions as a Leu-Ile reductase to yield deoxyaspergillic acid. After asaC forms deoxyaspergillic acid, the cytochrome P450 asaD oxidizes the pyrazinone to the hydroxamic acid-containing bioactive metabolite aspergillic acid. The hydroxylase/desaturase asaB can then convert aspergillic acid to hydroxyaspergillic acid. Both aspergillic acid and hydroxyaspergillic acid can form complexes with iron producing ferriaspergillin analogs. This chain is Hydroxylase/desaturase asaB, found in Aspergillus flavus (strain ATCC 200026 / FGSC A1120 / IAM 13836 / NRRL 3357 / JCM 12722 / SRRC 167).